A 412-amino-acid chain; its full sequence is P-selectin glycoprotein ligand 1 (412 aa).

An N-terminal signal peptide occupies residues 1–17 (MPLQLLLLLILLGPGNS). The propeptide occupies 18 to 41 (LQLWDTWADEAEKALGPLLARDRR). The Extracellular segment spans residues 18 to 320 (LQLWDTWADE…APDHISVKQC (303 aa)). Q42 is modified (pyrrolidone carboxylic acid). Y46, Y48, and Y51 each carry sulfotyrosine. Positions 56–95 (ETEPPEMLRNSTDTTPLTGPGTPESTTVEPAARRSTGLDA) are disordered. A glycan (O-linked (GalNAc...) threonine) is linked at T57. N65 carries N-linked (GlcNAc...) asparagine glycosylation. The span at 66–82 (STDTTPLTGPGTPESTT) shows a compositional bias: low complexity. Residue N111 is glycosylated (N-linked (GlcNAc...) asparagine). 12 repeat units span residues 122–131 (QTTQPAATEA), 132–141 (QTTQPVPTEA), 142–151 (QTTPLAATEA), 162–171 (QTTPLAATEA), 182–191 (QTTQPTGLEA), 192–201 (QTTAPAAMEA), 202–211 (QTTAPAAMEA), 212–221 (QTTPPAAMEA), 222–231 (QTTQTTAMEA), 232–241 (QTTAPEATEA), 242–251 (QTTQPTATEA), and 252–261 (QTTPLAAMEA). Positions 122-261 (QTTQPAATEA…QTTPLAAMEA (140 aa)) are 12 X 10 AA tandem repeats. Disordered regions lie at residues 125–146 (QPAA…TTPL) and 166–252 (LAAT…TEAQ). Residue N302 is glycosylated (N-linked (GlcNAc...) asparagine). A helical membrane pass occupies residues 321–341 (LLAILILALVATIFFVCTVVL). The Cytoplasmic segment spans residues 342–412 (AVRLSRKGHM…DDLTLHSFLP (71 aa)). Positions 374-412 (EGPSATANGGLSKAKSPGLTPEPREDREGDDLTLHSFLP) are disordered. Basic and acidic residues predominate over residues 395 to 406 (EPREDREGDDLT). Residue T406 is modified to Phosphothreonine. S409 carries the phosphoserine modification.

As to quaternary structure, homodimer; disulfide-linked. Interaction with P-, E- and L-selectins, through their lectin/EGF domains, is required for promoting recruitment and rolling of leukocytes. These interactions require sialyl Lewis X glycan modification but there is a differing dependence for tyrosine sulfations. Sulfation on Tyr-51 of PSGL1 is most important for high affinity L-selectin/SELL binding while P-selectin/SELP requires sulfation on Tyr-48. E-selectin/SELE binds with much lower affinity and requires the sLe(x) epitope, but apparently not tyrosine sulfation. Dimerization appears not to be required for P-selectin/SELP binding. Interacts with SNX20. Interacts with MSN and SYK; mediates the activation of SYK by SELPLG. Interacts with HAVCR1. (Microbial infection) Interacts with enterovirus 71 capsid proteins. In terms of assembly, (Microbial infection) Interacts with Staphylococcus aureus proteins SSL5 and SSL11; these interactions prevent SELPLG-mediated neutrophil rolling. In terms of processing, displays complex, core-2, sialylated and fucosylated O-linked oligosaccharides, at least some of which appear to contain poly-N-acetyllactosamine with varying degrees of substitution. Mainly disialylated or neutral forms of the core-2 tetrasaccharide, Galbeta1--&gt;4GlcNAcbeta1--&gt;6(Galbeta1--&gt;3)GalNAcOH. The GlcN:GalN ratio is approximately 2:1 and the Man:Fuc ratio 3:5. Contains about 14% fucose with alpha-1,3 linkage present in two forms: One species is a disialylated, monofucosylated glycan, and the other, a monosialylated, trifucosylated glycan with a polylactosamine backbone. The fucosylated forms carry the Lewis antigen and are important for interaction with selectins and for functioning in leukocyte rolling. The modification containing the sialyl Lewis X glycan is on Thr-57. No sulfated O-glycans. Some N-glycosylation. Sulfation, in conjunction with the SLe(x)-containing glycan, is necessary for P- and L-selectin binding. High affinity P-selectin binding has a preferred requirement for the isomer sulfated on both Tyr-48 and Tyr-51, whereas L-selectin binding requires predominantly sulfation on Tyr-51 with sulfation on Tyr-48 playing only a minor role. These sulfations play an important role in L- and P-selectin-mediated neutrophil recruitment, and leukocyte rolling. In terms of tissue distribution, expressed on neutrophils, monocytes and most lymphocytes.

The protein localises to the membrane. Its function is as follows. An SLe(x)-type proteoglycan, which through high affinity, calcium-dependent interactions with E-, P- and L-selectins, mediates rapid rolling of leukocytes over vascular surfaces during the initial steps in inflammation. Critical for the initial leukocyte capture. Functionally, (Microbial infection) Acts as a receptor for enterovirus 71. In Homo sapiens (Human), this protein is P-selectin glycoprotein ligand 1 (SELPLG).